We begin with the raw amino-acid sequence, 329 residues long: Replication factor C small subunit 1 (329 aa).

44 to 51 (GPPGTGKT) is a binding site for ATP.

It belongs to the activator 1 small subunits family. RfcS subfamily. Heteromultimer composed of small subunits (RfcS) and large subunits (RfcL).

Its function is as follows. Part of the RFC clamp loader complex which loads the PCNA sliding clamp onto DNA. The polypeptide is Replication factor C small subunit 1 (Pyrobaculum aerophilum (strain ATCC 51768 / DSM 7523 / JCM 9630 / CIP 104966 / NBRC 100827 / IM2)).